Reading from the N-terminus, the 396-residue chain is L-lactate dehydrogenase (396 aa).

The region spanning methionine 1–glycine 380 is the FMN hydroxy acid dehydrogenase domain. Tyrosine 24 lines the substrate pocket. Residues serine 106 and glutamine 127 each coordinate FMN. Tyrosine 129 provides a ligand contact to substrate. An FMN-binding site is contributed by threonine 155. Arginine 164 serves as a coordination point for substrate. Lysine 251 is an FMN binding site. The active-site Proton acceptor is the histidine 275. Substrate is bound at residue arginine 278. Aspartate 306–arginine 330 lines the FMN pocket.

This sequence belongs to the FMN-dependent alpha-hydroxy acid dehydrogenase family. The cofactor is FMN.

The protein resides in the cell inner membrane. It catalyses the reaction (S)-lactate + A = pyruvate + AH2. Functionally, catalyzes the conversion of L-lactate to pyruvate. Is coupled to the respiratory chain. This chain is L-lactate dehydrogenase, found in Salmonella newport (strain SL254).